Here is a 733-residue protein sequence, read N- to C-terminus: Non-secreted LysM effector LCP1 (733 aa).

The N-terminal stretch at 1-22 (MMRRPWLLSALVAWVKLPSVQG) is a signal peptide. 2 consecutive LysM domains span residues 211 to 256 (SEYT…KLCI) and 261 to 309 (DVYV…TICI). 9 N-linked (GlcNAc...) asparagine glycosylation sites follow: asparagine 298, asparagine 304, asparagine 340, asparagine 350, asparagine 381, asparagine 432, asparagine 442, asparagine 455, and asparagine 538. Positions 347-393 (LFHNVTAGDDCGTIGLKYSISLDDFIFLNSMIWPNCTNLWLRASYCV) constitute a LysM 3 domain. Residues 605–629 (SPITSSAPTSTTASSKTSSSAAQPT) show a composition bias toward low complexity. Residues 605 to 637 (SPITSSAPTSTTASSKTSSSAAQPTNVSTDGTC) are disordered. The N-linked (GlcNAc...) asparagine glycan is linked to asparagine 630. Chitin-binding type-1 domains lie at 634-680 (DGTC…KCDA) and 688-733 (DGTC…GVCT). Cystine bridges form between cysteine 637-cysteine 654, cysteine 645-cysteine 660, cysteine 653-cysteine 667, cysteine 671-cysteine 678, cysteine 691-cysteine 708, cysteine 699-cysteine 714, cysteine 707-cysteine 721, and cysteine 725-cysteine 732.

The protein belongs to the secreted LysM effector family.

It is found in the secreted. It localises to the cell membrane. The protein resides in the vacuole. Secreted effector that enables the plant pathogenic fungus to manipulate host defenses for successful infection. Not involved in host recognition and penetration but suppresses host cell death and promotes fumonisin biosynthesis while the pathogen colonizes maize kernels. The chain is Non-secreted LysM effector LCP1 from Gibberella moniliformis (strain M3125 / FGSC 7600) (Maize ear and stalk rot fungus).